A 183-amino-acid polypeptide reads, in one-letter code: Calcium-binding protein M (183 aa).

A lipid anchor (N-myristoyl glycine) is attached at Gly2. 4 consecutive EF-hand domains span residues 25-60, 61-96, 97-132, and 142-177; these read EEVA…KLPN, YPED…IGKG, SAED…MKNV, and DIEL…SPSL. Residues Asp74, Asp76, Ser78, Thr80, Glu85, Asp110, Asp112, Ser114, Glu121, Asp155, Asp157, Asn159, and Glu166 each contribute to the Ca(2+) site.

It belongs to the recoverin family.

This Dictyostelium discoideum (Social amoeba) protein is Calcium-binding protein M (cbpM).